The following is a 541-amino-acid chain: Protein yellow (541 aa).

An N-terminal signal peptide occupies residues Met1–Ala21. 2 N-linked (GlcNAc...) asparagine glycosylation sites follow: Asn144 and Asn215. A disordered region spans residues Gln443 to Ala463.

The protein belongs to the major royal jelly protein family.

The protein resides in the secreted. In terms of biological role, controls the pigmentation pattern of the adult cuticle and larval mouth parts. In Drosophila mauritiana (Fruit fly), this protein is Protein yellow (y).